Consider the following 441-residue polypeptide: ATP-dependent protease ATPase subunit HslU (441 aa).

ATP is bound by residues Ile17, 60–65 (GVGKTE), Asp253, Glu319, and Arg391.

It belongs to the ClpX chaperone family. HslU subfamily. A double ring-shaped homohexamer of HslV is capped on each side by a ring-shaped HslU homohexamer. The assembly of the HslU/HslV complex is dependent on binding of ATP.

It is found in the cytoplasm. In terms of biological role, ATPase subunit of a proteasome-like degradation complex; this subunit has chaperone activity. The binding of ATP and its subsequent hydrolysis by HslU are essential for unfolding of protein substrates subsequently hydrolyzed by HslV. HslU recognizes the N-terminal part of its protein substrates and unfolds these before they are guided to HslV for hydrolysis. In Legionella pneumophila (strain Paris), this protein is ATP-dependent protease ATPase subunit HslU.